The primary structure comprises 475 residues: UDP-glucosyltransferase UGT13248 (475 aa).

The span at 1–17 shows a compositional bias: low complexity; it reads METTVTAVSGTTSSSVG. The segment at 1 to 20 is disordered; the sequence is METTVTAVSGTTSSSVGHGA. UDP-alpha-D-glucose contacts are provided by residues His-38, Ser-152, Thr-299, Cys-352, 369–377, and 393–394; these read HCGWNSTLE and DQ.

The protein belongs to the UDP-glycosyltransferase family.

Functionally, involved in the detoxification of the Fusarium mycotoxin deoxynivalenol by the transfer of glucose from UDP-D-glucose to the hydroxyl group at C-3, forming deoxynivalenol-3-O-beta-D-glucoside. This is UDP-glucosyltransferase UGT13248 from Hordeum vulgare subsp. vulgare (Domesticated barley).